Here is a 418-residue protein sequence, read N- to C-terminus: Serine hydroxymethyltransferase (418 aa).

Residues Leu-120 and 124–126 contribute to the (6S)-5,6,7,8-tetrahydrofolate site; that span reads GHL. At Lys-229 the chain carries N6-(pyridoxal phosphate)lysine. 353–355 is a (6S)-5,6,7,8-tetrahydrofolate binding site; the sequence is SPF.

This sequence belongs to the SHMT family. Homodimer. It depends on pyridoxal 5'-phosphate as a cofactor.

It is found in the cytoplasm. The enzyme catalyses (6R)-5,10-methylene-5,6,7,8-tetrahydrofolate + glycine + H2O = (6S)-5,6,7,8-tetrahydrofolate + L-serine. The protein operates within one-carbon metabolism; tetrahydrofolate interconversion. Its pathway is amino-acid biosynthesis; glycine biosynthesis; glycine from L-serine: step 1/1. Catalyzes the reversible interconversion of serine and glycine with tetrahydrofolate (THF) serving as the one-carbon carrier. This reaction serves as the major source of one-carbon groups required for the biosynthesis of purines, thymidylate, methionine, and other important biomolecules. Also exhibits THF-independent aldolase activity toward beta-hydroxyamino acids, producing glycine and aldehydes, via a retro-aldol mechanism. The protein is Serine hydroxymethyltransferase of Psychrobacter arcticus (strain DSM 17307 / VKM B-2377 / 273-4).